Consider the following 295-residue polypeptide: Pyridoxal 5'-phosphate synthase subunit PdxS (295 aa).

A D-ribose 5-phosphate-binding site is contributed by D25. Residue K82 is the Schiff-base intermediate with D-ribose 5-phosphate of the active site. D-ribose 5-phosphate is bound at residue G154. R166 contributes to the D-glyceraldehyde 3-phosphate binding site. Residues G215 and 236-237 (GS) each bind D-ribose 5-phosphate.

Belongs to the PdxS/SNZ family. In terms of assembly, in the presence of PdxT, forms a dodecamer of heterodimers.

It carries out the reaction aldehydo-D-ribose 5-phosphate + D-glyceraldehyde 3-phosphate + L-glutamine = pyridoxal 5'-phosphate + L-glutamate + phosphate + 3 H2O + H(+). It functions in the pathway cofactor biosynthesis; pyridoxal 5'-phosphate biosynthesis. Functionally, catalyzes the formation of pyridoxal 5'-phosphate from ribose 5-phosphate (RBP), glyceraldehyde 3-phosphate (G3P) and ammonia. The ammonia is provided by the PdxT subunit. Can also use ribulose 5-phosphate and dihydroxyacetone phosphate as substrates, resulting from enzyme-catalyzed isomerization of RBP and G3P, respectively. This chain is Pyridoxal 5'-phosphate synthase subunit PdxS, found in Actinobacillus pleuropneumoniae serotype 3 (strain JL03).